Consider the following 445-residue polypeptide: Baccatin III:3-amino-3-phenylpropanoyltransferase (445 aa).

Belongs to the plant acyltransferase family.

The catalysed reaction is (3R)-3-amino-3-phenylpropanoyl-CoA + baccatin III = 3'-N-debenzoyl-2'-deoxytaxol + CoA. The protein operates within alkaloid biosynthesis; taxol biosynthesis. In terms of biological role, acyltransferase involved in taxol biosynthesis. Catalyzes the selective 13-O-acylation of baccatin III with (3R)-3-amino-3-phenylpropanoyl-CoA as the acyl donor to form 3'-N-debenzoyl-2'-deoxytaxol. The protein is Baccatin III:3-amino-3-phenylpropanoyltransferase of Taxus cuspidata (Japanese yew).